Consider the following 358-residue polypeptide: Cilia- and flagella-associated protein 263 (358 aa).

3 coiled-coil regions span residues 93 to 138 (YKKM…FKRN), 176 to 200 (RKNSALLTHKKKQQAQLRQQEEMAE), and 266 to 343 (RTKL…YTKS).

It belongs to the CFAP263 family. In terms of assembly, forms a complex with CFAP184; the interaction is required for functional activity in cilia. Interacts with HAP1 and PCM1.

Its subcellular location is the cytoplasm. The protein resides in the cytoskeleton. It is found in the microtubule organizing center. The protein localises to the centrosome. It localises to the centriolar satellite. Its subcellular location is the cell projection. The protein resides in the cilium. Its function is as follows. Component of centriolar satellites contributing to primary cilium formation. In complex with CFAP263, acts as a regulator of ciliary beating that connects radial spoke 3 (RS3) to the inner dynein arm (IDA) and the nexin-dynein regulatory complex (N-DRC). The complex is positioned parallel to N-DRC and forms a connection between the arch at the base of RS3, the IDA tail and N-DRC. The protein is Cilia- and flagella-associated protein 263 (cfap263) of Danio rerio (Zebrafish).